A 335-amino-acid chain; its full sequence is Glycerol-3-phosphate dehydrogenase [NAD(P)+] (335 aa).

The NADPH site is built by S15, Y16, R36, and K110. The sn-glycerol 3-phosphate site is built by K110, G139, and T141. Residue A143 coordinates NADPH. Sn-glycerol 3-phosphate contacts are provided by K195, D248, S258, R259, and N260. Catalysis depends on K195, which acts as the Proton acceptor. R259 contributes to the NADPH binding site. Positions 283 and 285 each coordinate NADPH.

Belongs to the NAD-dependent glycerol-3-phosphate dehydrogenase family.

The protein localises to the cytoplasm. It carries out the reaction sn-glycerol 3-phosphate + NAD(+) = dihydroxyacetone phosphate + NADH + H(+). The enzyme catalyses sn-glycerol 3-phosphate + NADP(+) = dihydroxyacetone phosphate + NADPH + H(+). It participates in membrane lipid metabolism; glycerophospholipid metabolism. Catalyzes the reduction of the glycolytic intermediate dihydroxyacetone phosphate (DHAP) to sn-glycerol 3-phosphate (G3P), the key precursor for phospholipid synthesis. In Pseudoalteromonas translucida (strain TAC 125), this protein is Glycerol-3-phosphate dehydrogenase [NAD(P)+].